The sequence spans 370 residues: 3-dehydroquinate synthase (370 aa).

NAD(+) is bound by residues 108–112 (GVIGD), 132–133 (TT), K145, and K154. E187, H249, and H267 together coordinate Zn(2+).

Belongs to the sugar phosphate cyclases superfamily. Dehydroquinate synthase family. It depends on Co(2+) as a cofactor. Requires Zn(2+) as cofactor. NAD(+) is required as a cofactor.

It is found in the cytoplasm. It carries out the reaction 7-phospho-2-dehydro-3-deoxy-D-arabino-heptonate = 3-dehydroquinate + phosphate. It functions in the pathway metabolic intermediate biosynthesis; chorismate biosynthesis; chorismate from D-erythrose 4-phosphate and phosphoenolpyruvate: step 2/7. Its function is as follows. Catalyzes the conversion of 3-deoxy-D-arabino-heptulosonate 7-phosphate (DAHP) to dehydroquinate (DHQ). The sequence is that of 3-dehydroquinate synthase from Cereibacter sphaeroides (strain KD131 / KCTC 12085) (Rhodobacter sphaeroides).